Reading from the N-terminus, the 549-residue chain is SH3 domain-containing protein 21 (549 aa).

Residues Met-1–Ser-56 are disordered. A compositionally biased stretch (polar residues) spans Pro-41–Tyr-54. An SH3 domain is found at Ser-65 to Pro-126. Disordered regions lie at residues Pro-142–Lys-303 and Phe-332–Asn-479. Positions Gln-211–Ser-220 are enriched in low complexity. 2 stretches are compositionally biased toward basic and acidic residues: residues Pro-267–Ala-280 and Phe-332–Gln-342. 2 stretches are compositionally biased toward polar residues: residues Cys-343–Gln-365 and Val-439–Gln-456. The stretch at Met-482–Met-510 forms a coiled coil. The tract at residues Gln-528–Glu-549 is disordered.

The sequence is that of SH3 domain-containing protein 21 (Sh3d21) from Mus musculus (Mouse).